A 142-amino-acid chain; its full sequence is Large ribosomal subunit protein uL11 (142 aa).

This sequence belongs to the universal ribosomal protein uL11 family. Part of the ribosomal stalk of the 50S ribosomal subunit. Interacts with L10 and the large rRNA to form the base of the stalk. L10 forms an elongated spine to which L12 dimers bind in a sequential fashion forming a multimeric L10(L12)X complex. In terms of processing, one or more lysine residues are methylated.

Functionally, forms part of the ribosomal stalk which helps the ribosome interact with GTP-bound translation factors. This is Large ribosomal subunit protein uL11 from Shewanella sp. (strain ANA-3).